The sequence spans 330 residues: Pre-mRNA-splicing factor 38 (330 aa).

The interval 182–330 (SVLDEDLDDE…SRGERDRRRY (149 aa)) is disordered. Residues 184–199 (LDEDLDDELPSDEEKA) are compositionally biased toward acidic residues. Residues 213-224 (RRPRRVRSKSRS) show a composition bias toward basic residues. The span at 240-330 (RSRDYYDELE…SRGERDRRRY (91 aa)) shows a compositional bias: basic and acidic residues.

This sequence belongs to the PRP38 family. In terms of assembly, component of the spliceosome C complex. Interacts with Mfap1 (via C-terminus). In terms of tissue distribution, detected in all germal and follicle cells.

Its subcellular location is the nucleus. Required for pre-mRNA splicing. The chain is Pre-mRNA-splicing factor 38 from Drosophila melanogaster (Fruit fly).